A 315-amino-acid chain; its full sequence is Putative carboxypeptidase RC0549 (315 aa).

Ser-125 acts as the Nucleophile in catalysis. Residues Glu-225 and His-288 each act as charge relay system in the active site.

The protein belongs to the peptidase S66 family.

In Rickettsia conorii (strain ATCC VR-613 / Malish 7), this protein is Putative carboxypeptidase RC0549.